Reading from the N-terminus, the 244-residue chain is MNIDLNADLGEGCASDSELLTLVSSANIACGFHAGDAQTMLTCVREALKNGVAIGAHPSFPDRDNFGRTAMVLPPETVYAQTLYQIGALGAIVQAQGGVMRHVKPHGMLYNQAAKDPHLAQAIAKAVHDYDPSLILVGLAGSELIRAGERHRLVTRQEVFADRGYQADGSLVPRTQPGALIHDEEQALAQTLDMVQAGRVKSVTGVWTTVTAQTVCIHGDGEYALAFARRLRAAFNARNIHVIA.

The protein belongs to the LamB/PxpA family. Forms a complex composed of PxpA, PxpB and PxpC.

It carries out the reaction 5-oxo-L-proline + ATP + 2 H2O = L-glutamate + ADP + phosphate + H(+). Functionally, catalyzes the cleavage of 5-oxoproline to form L-glutamate coupled to the hydrolysis of ATP to ADP and inorganic phosphate. This Salmonella agona (strain SL483) protein is 5-oxoprolinase subunit A.